The primary structure comprises 406 residues: HEAT repeat-containing taxis protein OE_2401F (406 aa).

HEAT repeat units follow at residues 7 to 41 (LERSGDVEKLVELLQESEKETVRRRAAEILGNLDE), 42 to 78 (PEPEGIQALVDAMSDDDESVRAAAIDALTQQEAVDAL), 90 to 127 (GATWAQAEAFVENLESETPELRMAAANVLGLLGVEDTA), 153 to 184 (IEQPAVTGILVDCLHGEPLKVRREAAESLGRL), 185 to 215 (TTEQALDGLLSVVEDDSEAMRRTAVSSLGRF), 216 to 252 (ETAEPVDALVERLGDESDLVRRAAVFSLIEILSNVPP), and 370 to 406 (VGGDRSRQRLERLVDETDSEEVRRRAFSAISKLGGKT).

In terms of assembly, interacts with chemotaxis (Che) proteins.

Its function is as follows. Involved in taxis signal transduction. Essential for the ability to control the direction of flagellar rotation. May have a role between CheY and the flagellum. The sequence is that of HEAT repeat-containing taxis protein OE_2401F from Halobacterium salinarum (strain ATCC 29341 / DSM 671 / R1).